Here is a 448-residue protein sequence, read N- to C-terminus: Methylenetetrahydrofolate--tRNA-(uracil-5-)-methyltransferase TrmFO (448 aa).

13-18 (GAGLAG) serves as a coordination point for FAD.

Belongs to the MnmG family. TrmFO subfamily. FAD serves as cofactor.

The protein localises to the cytoplasm. It carries out the reaction uridine(54) in tRNA + (6R)-5,10-methylene-5,6,7,8-tetrahydrofolate + NADH + H(+) = 5-methyluridine(54) in tRNA + (6S)-5,6,7,8-tetrahydrofolate + NAD(+). The catalysed reaction is uridine(54) in tRNA + (6R)-5,10-methylene-5,6,7,8-tetrahydrofolate + NADPH + H(+) = 5-methyluridine(54) in tRNA + (6S)-5,6,7,8-tetrahydrofolate + NADP(+). Functionally, catalyzes the folate-dependent formation of 5-methyl-uridine at position 54 (M-5-U54) in all tRNAs. The polypeptide is Methylenetetrahydrofolate--tRNA-(uracil-5-)-methyltransferase TrmFO (Streptococcus pyogenes serotype M2 (strain MGAS10270)).